The chain runs to 61 residues: Large ribosomal subunit protein uL30 (61 aa).

It belongs to the universal ribosomal protein uL30 family. Part of the 50S ribosomal subunit.

This chain is Large ribosomal subunit protein uL30, found in Treponema denticola (strain ATCC 35405 / DSM 14222 / CIP 103919 / JCM 8153 / KCTC 15104).